Consider the following 279-residue polypeptide: MKIIILLGFLGATLSAPLIPQRLMSASNSNELLLNLNNGQLLPLRLQGPLNSWIPPFSGVLQQQQQAQIPGLAQFSLSALDQFAGLFPNQIPFPGQASFAQGAQAGQVDPSQAQTPPQTQPGPNHVMPYVFSFKMPQEQGQMFEYYPVYVLLPWEQPQQTVPRSPPQTRQQQYEEQIPFYDQFGYIPQLAEPAIPGGQQQLAFDPQLGTAPEIAVMSTGEEIPYLQKEVINFRRDSAGVLMPSTSPKPSTTNVFTSAIDRTITAKFPEEKAKTDGLREP.

The N-terminal stretch at 1–15 (MKIIILLGFLGATLS) is a signal peptide. Low complexity predominate over residues 100–123 (AQGAQAGQVDPSQAQTPPQTQPGP). The tract at residues 100–125 (AQGAQAGQVDPSQAQTPPQTQPGPNH) is disordered. 2 O-linked (GalNAc...) threonine glycosylation sites follow: threonine 115 and threonine 119. The segment at 127-129 (MPY) is interaction with ARHGEF5. O-linked (GalNAc...) threonine glycosylation is found at threonine 168, threonine 244, threonine 250, threonine 251, threonine 255, and threonine 273.

The protein belongs to the ODAM family. In terms of assembly, interacts (via C-terminus) with ARHGEF5. Post-translationally, O-glycosylated.

It localises to the secreted. The protein localises to the cytoplasm. The protein resides in the nucleus. Its function is as follows. Tooth-associated epithelia protein that probably plays a role in odontogenesis, the complex process that results in the initiation and generation of the tooth. May be incorporated in the enamel matrix at the end of mineralization process. Involved in the induction of RHOA activity via interaction with ARHGEF and expression of downstream factors such as ROCK. Plays a role in attachment of the junctional epithelium to the tooth surface. The protein is Odontogenic ameloblast-associated protein (ODAM) of Macaca mulatta (Rhesus macaque).